The primary structure comprises 795 residues: Delta-1-pyrroline-5-carboxylate synthase (795 aa).

The glutamate 5-kinase stretch occupies residues methionine 1–proline 361. Positions 117, 223, and 246 each coordinate substrate. ATP contacts are provided by residues serine 266 to aspartate 267 and methionine 305 to lysine 311. Lysine 311, lysine 347, and lysine 550 each carry N6-succinyllysine. Residues threonine 362 to asparagine 795 form a gamma-glutamyl phosphate reductase region.

In the N-terminal section; belongs to the glutamate 5-kinase family. This sequence in the C-terminal section; belongs to the gamma-glutamyl phosphate reductase family. In terms of assembly, can form homodimers/multimers.

The protein localises to the mitochondrion matrix. It catalyses the reaction L-glutamate + ATP = L-glutamyl 5-phosphate + ADP. It carries out the reaction L-glutamate 5-semialdehyde + phosphate + NADP(+) = L-glutamyl 5-phosphate + NADPH + H(+). It functions in the pathway amino-acid biosynthesis; L-proline biosynthesis; L-glutamate 5-semialdehyde from L-glutamate: step 1/2. It participates in amino-acid biosynthesis; L-proline biosynthesis; L-glutamate 5-semialdehyde from L-glutamate: step 2/2. In terms of biological role, bifunctional enzyme that converts glutamate to glutamate 5-semialdehyde, an intermediate in the biosynthesis of proline, ornithine and arginine. This Pongo abelii (Sumatran orangutan) protein is Delta-1-pyrroline-5-carboxylate synthase (ALDH18A1).